A 245-amino-acid chain; its full sequence is Myozenin-3 (245 aa).

At Ser-31 the chain carries Phosphoserine. The segment at 50–67 is binding to ACTN2, PPP3CA and TCAP; it reads LLFQKRQRRVQKFTFELS. Residues 67 to 108 are binding to FLNC; that stretch reads SESLQAILASSARGKVAGRAAQATVPNGLEEQNHHSETHVFQ. Residues 93–134 form a disordered region; that stretch reads NGLEEQNHHSETHVFQGSPGDPGITHLGAAGTGSVRSPSALA. The interval 180 to 201 is binding to ACTN2; sequence PIPRDYRNFNKTPVPFGGPHVR.

Belongs to the myozenin family. In terms of assembly, interacts with ACTN2, LDB3, FLNC, PPP3CA and TCAP. As to expression, expressed specifically in skeletal muscle and is enriched in fast-twitch muscle fibers. Not detected in heart.

It localises to the cytoplasm. Its subcellular location is the myofibril. The protein localises to the sarcomere. It is found in the z line. Its function is as follows. Myozenins may serve as intracellular binding proteins involved in linking Z line proteins such as alpha-actinin, gamma-filamin, TCAP/telethonin, LDB3/ZASP and localizing calcineurin signaling to the sarcomere. Plays an important role in the modulation of calcineurin signaling. May play a role in myofibrillogenesis. This is Myozenin-3 from Mus musculus (Mouse).